A 360-amino-acid chain; its full sequence is Codeine O-demethylase (360 aa).

Residues 211 to 311 (GLQTMRMNYY…RLSIATFHDS (101 aa)) form the Fe2OG dioxygenase domain. Residue Tyr-220 participates in 2-oxoglutarate binding. His-235, Asp-237, and His-292 together coordinate Fe cation. 2-oxoglutarate is bound by residues Arg-302 and Ser-304.

It belongs to the iron/ascorbate-dependent oxidoreductase family. The cofactor is L-ascorbate. Fe cation is required as a cofactor. In terms of tissue distribution, mainly expressed in stems, capsules and leaves and, to a lower extent, in roots.

It carries out the reaction codeine + 2-oxoglutarate + O2 = morphine + formaldehyde + succinate + CO2. The catalysed reaction is thebaine + 2-oxoglutarate + O2 = oripavine + formaldehyde + succinate + CO2. It catalyses the reaction (S)-scoulerine + 2-oxoglutarate + O2 = (S)-3-O-demethylscoulerine + formaldehyde + succinate + CO2. The enzyme catalyses thebaine + 2-oxoglutarate + O2 = neopinone + formaldehyde + succinate + CO2. It carries out the reaction (S)-reticuline + 2-oxoglutarate + O2 = (S)-6-O-demethylreticuline + formaldehyde + succinate + CO2. The catalysed reaction is (S)-tetrahydropalmatine + S-adenosyl-L-methionine = (S)-cis-N-methyltetrahydropalmatine + S-adenosyl-L-homocysteine. It participates in alkaloid biosynthesis; morphine biosynthesis. With respect to regulation, moderate substrate inhibition. Not inhibited in vitro by acylcyclohexanediones. Its function is as follows. Non-heme dioxygenase involved in biosynthesis of morphinan-type benzylisoquinoline and opiate alkaloids natural products. Mediates the conversion of codeine to morphine. Also catalyzes, with lower efficiency, the 3-O-demethylation of thebaine to oripavine and of (S)-scoulerine to 3-O-demethylscoulerine. Supports, with a lower turnover, the conversion of codeinone to morphinone, of thebaine to neopinone, and of neopine to neomorphine. Supports dealkylation reactions such as O,O-demethylenation in the metabolism of protopine, benzo[c]phenanthridine, and rhoeadine alkaloids; cleaves a methylenedioxy bridge leaving two hydroxyl groups. Catalyzes the O,O-demethylenation of methylenedioxy bridges on protopine alkaloids such as allocryptopine, cryptopine and protopine. No activity with (S)-reticuline, salutaridine, papaverine, (S)-corytuberine, oripavine, pavine or noscapine. This chain is Codeine O-demethylase, found in Papaver somniferum (Opium poppy).